The sequence spans 189 residues: UPF0301 protein PFLU_5755 (189 aa).

Belongs to the UPF0301 (AlgH) family.

The protein is UPF0301 protein PFLU_5755 of Pseudomonas fluorescens (strain SBW25).